Consider the following 559-residue polypeptide: Potassium-transporting ATPase potassium-binding subunit (559 aa).

Transmembrane regions (helical) follow at residues 5–25 (GFLL…PLGM), 63–83 (LLAI…LLML), 131–151 (VGLT…VFAL), 173–193 (ITLW…IQQG), 254–274 (VQML…GEVV), 282–302 (AILW…MWAE), 327–347 (FGIL…CGAV), 356–376 (ALGG…FGGV), 379–399 (GLYG…LMVG), 416–436 (MIAL…ALAM), 483–503 (LLLA…VMAI), and 525–545 (ALFI…TFIP).

This sequence belongs to the KdpA family. The system is composed of three essential subunits: KdpA, KdpB and KdpC.

It is found in the cell inner membrane. Part of the high-affinity ATP-driven potassium transport (or Kdp) system, which catalyzes the hydrolysis of ATP coupled with the electrogenic transport of potassium into the cytoplasm. This subunit binds the periplasmic potassium ions and delivers the ions to the membrane domain of KdpB through an intramembrane tunnel. This chain is Potassium-transporting ATPase potassium-binding subunit, found in Klebsiella pneumoniae subsp. pneumoniae (strain ATCC 700721 / MGH 78578).